The sequence spans 471 residues: 6-phosphofructo-2-kinase/fructose-2,6-bisphosphatase 1 (471 aa).

Ser2 carries the N-acetylserine modification. The tract at residues 2–250 (SREMGELTQT…AYYLMNIHVT (249 aa)) is 6-phosphofructo-2-kinase. At Ser33 the chain carries Phosphoserine; by PKA. Position 49–57 (49–57 (GLPARGKTY)) interacts with ATP. Residues Arg82 and Arg105 each contribute to the beta-D-fructose 6-phosphate site. Asp131 is a catalytic residue. The beta-D-fructose 6-phosphate site is built by Thr133 and Arg139. Ser141 bears the Phosphoserine mark. Cys161 is an active-site residue. 170–175 (NIKQVK) is a binding site for ATP. The beta-D-fructose 6-phosphate site is built by Lys175, Arg196, and Tyr200. A fructose-2,6-bisphosphatase region spans residues 251-471 (PRSIYLCRHG…EALDTVPAHY (221 aa)). Arg258 lines the beta-D-fructose 2,6-bisphosphate pocket. His259 (tele-phosphohistidine intermediate) is an active-site residue. Residues Asn265, Gly271, and Arg308 each contribute to the beta-D-fructose 2,6-bisphosphate site. Glu328 functions as the Proton donor/acceptor in the catalytic mechanism. Positions 339, 353, 357, 368, 394, and 398 each coordinate beta-D-fructose 2,6-bisphosphate. 350–353 (FALR) provides a ligand contact to ATP. Residues 394-398 (QAVMR) and Tyr430 contribute to the ATP site.

It in the C-terminal section; belongs to the phosphoglycerate mutase family. Homodimer. In terms of tissue distribution, liver.

It carries out the reaction beta-D-fructose 2,6-bisphosphate + H2O = beta-D-fructose 6-phosphate + phosphate. The catalysed reaction is beta-D-fructose 6-phosphate + ATP = beta-D-fructose 2,6-bisphosphate + ADP + H(+). With respect to regulation, phosphorylation at Ser-33 inhibits the kinase and activates the bisphosphatase. Synthesis and degradation of fructose 2,6-bisphosphate. This chain is 6-phosphofructo-2-kinase/fructose-2,6-bisphosphatase 1, found in Rattus norvegicus (Rat).